Reading from the N-terminus, the 1248-residue chain is Bifunctional autolysin (1248 aa).

The signal sequence occupies residues 1–29; that stretch reads MAKKFNYKLPSMVALTLVGSAVTAHQVQA. Positions 103–134 are disordered; sequence GDTRANQSATTNNTQPVAKSTSTTAPKTNTNV. The N-acetylmuramoyl-L-alanine amidase stretch occupies residues 191–767; that stretch reads ASAQPRSVAA…AVAQPKTAVK (577 aa). 7 GW domains span residues 435–509, 511–585, 604–678, 680–754, 776–851, 853–928, and 935–1009; these read TVAA…YNTA, SPVN…DTAK, TVSS…YNNA, SPVN…VPAA, TTQT…VQNL, KEVK…APTA, and AAKD…KELI. Residues 768 to 1248 form an endo-beta-N-acetylglucosaminidase region; it reads AYTVTKPQTT…GKYFDIPQYK (481 aa).

It in the N-terminal section; belongs to the N-acetylmuramoyl-L-alanine amidase 2 family. The protein in the C-terminal section; belongs to the glycosyl hydrolase 73 family. Oligomer; forms a ring structure at the cell surface which is important for efficient partitioning of daughter cells after cell division. In terms of processing, undergoes proteolytic processing to generate the two extracellular lytic enzymes, probably at the septal region on the cell surface.

Its subcellular location is the secreted. The enzyme catalyses Hydrolyzes the link between N-acetylmuramoyl residues and L-amino acid residues in certain cell-wall glycopeptides.. It catalyses the reaction an N(4)-(oligosaccharide-(1-&gt;3)-[oligosaccharide-(1-&gt;6)]-beta-D-Man-(1-&gt;4)-beta-D-GlcNAc-(1-&gt;4)-alpha-D-GlcNAc)-L-asparaginyl-[protein] + H2O = an oligosaccharide-(1-&gt;3)-[oligosaccharide-(1-&gt;6)]-beta-D-Man-(1-&gt;4)-D-GlcNAc + N(4)-(N-acetyl-beta-D-glucosaminyl)-L-asparaginyl-[protein]. Its function is as follows. Endohydrolysis of the di-N-acetylchitobiosyl unit in high-mannose glycopeptides and glycoproteins containing the -[(Man)5(GlcNAc)2]-Asn structure. One N-acetyl-D-glucosamine residue remains attached to the protein; the rest of the oligosaccharide is released intact. Cleaves the peptidoglycan connecting the daughter cells at the end of the cell division cycle, resulting in the separation of the two newly divided cells. Acts as an autolysin in penicillin-induced lysis. In Staphylococcus aureus (strain Mu50 / ATCC 700699), this protein is Bifunctional autolysin (atl).